The chain runs to 599 residues: Aspartate--tRNA(Asp/Asn) ligase (599 aa).

Residue Glu-174 participates in L-aspartate binding. The segment at 198 to 201 is aspartate; it reads QLFK. L-aspartate is bound at residue Arg-220. Residues 220–222 and Gln-229 each bind ATP; that span reads RDE. His-457 is an L-aspartate binding site. ATP is bound at residue Glu-491. Arg-498 contributes to the L-aspartate binding site. 543 to 546 is an ATP binding site; that stretch reads GLDR.

The protein belongs to the class-II aminoacyl-tRNA synthetase family. Type 1 subfamily. In terms of assembly, homodimer.

It localises to the cytoplasm. The catalysed reaction is tRNA(Asx) + L-aspartate + ATP = L-aspartyl-tRNA(Asx) + AMP + diphosphate. Functionally, aspartyl-tRNA synthetase with relaxed tRNA specificity since it is able to aspartylate not only its cognate tRNA(Asp) but also tRNA(Asn). Reaction proceeds in two steps: L-aspartate is first activated by ATP to form Asp-AMP and then transferred to the acceptor end of tRNA(Asp/Asn). The protein is Aspartate--tRNA(Asp/Asn) ligase of Paraburkholderia xenovorans (strain LB400).